The chain runs to 36 residues: U-metritoxin-Msn1a (36 aa).

The ShKT domain occupies 4–36 (CKDKLPACGEYRGSFCKLEKVKSNCEKTCGVKC). Cystine bridges form between C4/C36, C11/C28, and C19/C32.

This sequence belongs to the sea anemone type 1 potassium channel toxin family. Type 1b subfamily.

It localises to the secreted. The protein localises to the nematocyst. Its function is as follows. Has hemolytic activity. Inhibits voltage-gated potassium channels (Kv1/KCNA). The chain is U-metritoxin-Msn1a from Metridium senile (Brown sea anemone).